The following is a 552-amino-acid chain: Probable protein kinase UbiB (552 aa).

One can recognise a Protein kinase domain in the interval 121 to 504 (HFDTVPLASA…QGLQRRVVNA (384 aa)). ATP contacts are provided by residues 127–135 (LASASISQV) and Lys149. The Proton acceptor role is filled by Asp284. 2 helical membrane-spanning segments follow: residues 501–521 (VVNA…YGLH) and 526–546 (YLGA…LALF).

This sequence belongs to the ABC1 family. UbiB subfamily.

The protein resides in the cell inner membrane. Its pathway is cofactor biosynthesis; ubiquinone biosynthesis [regulation]. Is probably a protein kinase regulator of UbiI activity which is involved in aerobic coenzyme Q (ubiquinone) biosynthesis. This chain is Probable protein kinase UbiB, found in Xylella fastidiosa (strain 9a5c).